Here is a 497-residue protein sequence, read N- to C-terminus: Meiosis-specific serine/threonine-protein kinase MEK1 (497 aa).

The FHA domain occupies 47-102 (VKVGRNDKECQLVLTNPSISSVHCVFWCVFFDEDSIPMFYVKDCSLNGTYLNGLLL). Residues 162–444 (EITNRIVGNG…SKQGLKHIWI (283 aa)) form the Protein kinase domain. ATP-binding positions include 168–176 (VGNGTFGHV) and lysine 199. Catalysis depends on aspartate 290, which acts as the Proton acceptor.

The protein belongs to the protein kinase superfamily. CAMK Ser/Thr protein kinase family. CHEK2 subfamily.

It catalyses the reaction L-seryl-[protein] + ATP = O-phospho-L-seryl-[protein] + ADP + H(+). The enzyme catalyses L-threonyl-[protein] + ATP = O-phospho-L-threonyl-[protein] + ADP + H(+). In terms of biological role, probable protein kinase required for meiotic recombination. The chain is Meiosis-specific serine/threonine-protein kinase MEK1 (MEK1) from Saccharomyces cerevisiae (strain ATCC 204508 / S288c) (Baker's yeast).